The primary structure comprises 717 residues: Fatty acid oxidation complex subunit alpha (717 aa).

Residues 1–189 (MIYQSPTIEV…NVGAIDALVA (189 aa)) are enoyl-CoA hydratase/isomerase. Asp296 provides a ligand contact to substrate. A 3-hydroxyacyl-CoA dehydrogenase region spans residues 311–717 (KKVNSAAVLG…ANNGSYYQQA (407 aa)). NAD(+)-binding positions include Met324, Asp343, 400–402 (VVE), Lys407, and Ser429. Catalysis depends on His450, which acts as the For 3-hydroxyacyl-CoA dehydrogenase activity. Asn453 lines the NAD(+) pocket. Positions 500 and 660 each coordinate substrate.

The protein in the N-terminal section; belongs to the enoyl-CoA hydratase/isomerase family. In the C-terminal section; belongs to the 3-hydroxyacyl-CoA dehydrogenase family. As to quaternary structure, heterotetramer of two alpha chains (FadB) and two beta chains (FadA).

The catalysed reaction is a (3S)-3-hydroxyacyl-CoA + NAD(+) = a 3-oxoacyl-CoA + NADH + H(+). It carries out the reaction a (3S)-3-hydroxyacyl-CoA = a (2E)-enoyl-CoA + H2O. The enzyme catalyses a 4-saturated-(3S)-3-hydroxyacyl-CoA = a (3E)-enoyl-CoA + H2O. It catalyses the reaction (3S)-3-hydroxybutanoyl-CoA = (3R)-3-hydroxybutanoyl-CoA. The catalysed reaction is a (3Z)-enoyl-CoA = a 4-saturated (2E)-enoyl-CoA. It carries out the reaction a (3E)-enoyl-CoA = a 4-saturated (2E)-enoyl-CoA. It participates in lipid metabolism; fatty acid beta-oxidation. In terms of biological role, involved in the aerobic and anaerobic degradation of long-chain fatty acids via beta-oxidation cycle. Catalyzes the formation of 3-oxoacyl-CoA from enoyl-CoA via L-3-hydroxyacyl-CoA. It can also use D-3-hydroxyacyl-CoA and cis-3-enoyl-CoA as substrate. The protein is Fatty acid oxidation complex subunit alpha of Shewanella piezotolerans (strain WP3 / JCM 13877).